The following is a 441-amino-acid chain: MSTKPTIAFTHLGCEKNRIDTEHIIGLLVQAGYEVDANEELADYVVVNTCSFIQAAREESVKTLVELAEANKKIVIAGCMAQHFPEELLAELPEAIALVGTGDYHKIVDVMQRVEKGDRVKEVTAEPTYIADETTPRYRTTSEGVAYVRIAEGCDYRCAFCIIPHLRGKARSRTIESIVVEAQKLADQGVKEIILISQITTNYGIDIYGQPKLADLLEALGKVDIPWIRMHYAYPTGLTPKVITAIQDTPNILPYLDLPLQHSHPEILRAMNRPWQGQVNDDIIKRIKTAMPNAVLRTSFIVGFPGETEEHHSHLVEFVKRHEFDHVGVFTFSPEEGTPAYNLPNQLPQEVMDARRQEIMEVQQSISWQQNQKLVGQLVDVLIEQENPQTGELIGRSPRFSPEVDGLIYVKGEARLGCIVPVMITDADIYDLYGCLISSAA.

The region spanning 5 to 116 (PTIAFTHLGC…IVDVMQRVEK (112 aa)) is the MTTase N-terminal domain. The [4Fe-4S] cluster site is built by Cys14, Cys50, Cys79, Cys154, Cys158, and Cys161. Residues 140 to 370 (TTSEGVAYVR…EVQQSISWQQ (231 aa)) enclose the Radical SAM core domain. The TRAM domain occupies 372 to 438 (QKLVGQLVDV…IYDLYGCLIS (67 aa)).

The protein belongs to the methylthiotransferase family. RimO subfamily. Requires [4Fe-4S] cluster as cofactor.

It localises to the cytoplasm. The enzyme catalyses L-aspartate(89)-[ribosomal protein uS12]-hydrogen + (sulfur carrier)-SH + AH2 + 2 S-adenosyl-L-methionine = 3-methylsulfanyl-L-aspartate(89)-[ribosomal protein uS12]-hydrogen + (sulfur carrier)-H + 5'-deoxyadenosine + L-methionine + A + S-adenosyl-L-homocysteine + 2 H(+). Functionally, catalyzes the methylthiolation of an aspartic acid residue of ribosomal protein uS12. The protein is Ribosomal protein uS12 methylthiotransferase RimO of Trichodesmium erythraeum (strain IMS101).